Reading from the N-terminus, the 599-residue chain is CAP-Gly domain-containing linker protein 4 (599 aa).

ANK repeat units lie at residues 65-101, 149-180, and 186-215; these read TSVS…NVND, TNMN…DVDA, and NFGT…NPAF. The region spanning 303-345 is the CAP-Gly 1 domain; that stretch reads GTTEFASGQWAGIELDEPEGKNNGSVGRVQYFKCAPKYGIFAP. A disordered region spans residues 387-482; the sequence is SGLMTSKKEN…TSAANNTHRE (96 aa). Positions 443–462 are enriched in low complexity; that stretch reads LSTSSSSGKKTLSKSPSLPS. Positions 468-478 are enriched in polar residues; it reads LKSSTTSAANN. In terms of domain architecture, CAP-Gly 2 spans 505–547; the sequence is GTTNFAPGYWYGIELEKPHGKNDGSVGGVQYFSCSPRYGIFAP. Residue Ser-557 is modified to Phosphoserine. Residues 565-599 are disordered; the sequence is SSNKQNHSYPGFRRSFSTTSASSQKEINRRNAFAK. The span at 576–587 shows a compositional bias: low complexity; the sequence is FRRSFSTTSASS.

In Rattus norvegicus (Rat), this protein is CAP-Gly domain-containing linker protein 4 (Clip4).